The following is a 202-amino-acid chain: Pyridoxal 5'-phosphate synthase subunit PdxT (202 aa).

Residue 52 to 54 participates in L-glutamine binding; the sequence is GES. Cysteine 84 (nucleophile) is an active-site residue. L-glutamine-binding positions include arginine 120 and 148 to 149; that span reads IR. Residues histidine 185 and glutamate 187 each act as charge relay system in the active site.

The protein belongs to the glutaminase PdxT/SNO family. In the presence of PdxS, forms a dodecamer of heterodimers. Only shows activity in the heterodimer.

It carries out the reaction aldehydo-D-ribose 5-phosphate + D-glyceraldehyde 3-phosphate + L-glutamine = pyridoxal 5'-phosphate + L-glutamate + phosphate + 3 H2O + H(+). It catalyses the reaction L-glutamine + H2O = L-glutamate + NH4(+). Its pathway is cofactor biosynthesis; pyridoxal 5'-phosphate biosynthesis. Functionally, catalyzes the hydrolysis of glutamine to glutamate and ammonia as part of the biosynthesis of pyridoxal 5'-phosphate. The resulting ammonia molecule is channeled to the active site of PdxS. In Methanopyrus kandleri (strain AV19 / DSM 6324 / JCM 9639 / NBRC 100938), this protein is Pyridoxal 5'-phosphate synthase subunit PdxT.